An 827-amino-acid chain; its full sequence is Zinc finger protein 438 (827 aa).

3 disordered regions span residues Met-1–Lys-31, Leu-117–Pro-173, and Ala-193–Asp-232. 2 stretches are compositionally biased toward polar residues: residues Asn-16–Lys-31 and Pro-150–Met-159. Pro residues predominate over residues Pro-217–Glu-226. C2H2-type zinc fingers lie at residues His-506–His-528, Tyr-534–His-556, and Met-566–His-589. Positions Phe-682–Pro-723 are disordered. Basic and acidic residues-rich tracts occupy residues Thr-688–Asp-699 and Arg-706–Ala-721. Residues Phe-775 to His-798 form a C2H2-type 4 zinc finger.

The protein resides in the nucleus. Its function is as follows. Acts as a transcriptional repressor. This is Zinc finger protein 438 (ZNF438) from Pongo abelii (Sumatran orangutan).